A 204-amino-acid chain; its full sequence is MTNIFTPIEEALEAYKNGEFLIVMDDEDRENEGDLIMAAELITQEKMAFLVRYSSGYVCVPLSEERANQLELPPMLANRSDRHGTAYTITCDFAEGTTTGISAHDRALTTRSLANPNSKPQDFIKPGHILPLRAVPGLLKKRRGHTEAAVQLSTLAGLQPAGVICELVRDEDGLMMRLDDCIQFGKKHGIKIININQLVEYISK.

Mg(2+) is bound at residue Glu-30. Residue Asp-34 participates in D-ribulose 5-phosphate binding. Position 59 is an S-glutathionyl cysteine (Cys-59). D-ribulose 5-phosphate-binding positions include Thr-85 and 142-146 (RRGHT). His-145 is a Mg(2+) binding site.

As to quaternary structure, homodimer. It depends on Mg(2+) as a cofactor. Requires Mn(2+) as cofactor. S-glutathionylation is reversible and dependent on a glutaredoxin.

The enzyme catalyses D-ribulose 5-phosphate = (2S)-2-hydroxy-3-oxobutyl phosphate + formate + H(+). It participates in cofactor biosynthesis; riboflavin biosynthesis; 2-hydroxy-3-oxobutyl phosphate from D-ribulose 5-phosphate: step 1/1. Functionally, catalyzes the conversion of D-ribulose 5-phosphate to formate and 3,4-dihydroxy-2-butanone 4-phosphate. The sequence is that of 3,4-dihydroxy-2-butanone 4-phosphate synthase (RIB3) from Candida albicans (strain SC5314 / ATCC MYA-2876) (Yeast).